The primary structure comprises 84 residues: UPF0153 protein PA1578.1 (84 aa).

Belongs to the UPF0153 family.

This chain is UPF0153 protein PA1578.1, found in Pseudomonas aeruginosa (strain ATCC 15692 / DSM 22644 / CIP 104116 / JCM 14847 / LMG 12228 / 1C / PRS 101 / PAO1).